Here is a 163-residue protein sequence, read N- to C-terminus: K88 minor fimbrial subunit FaeF (163 aa).

An N-terminal signal peptide occupies residues 1–22 (MKKTMMAAALVLSALSIQSALA).

The protein resides in the fimbrium. Functionally, K88 minor fimbrial subunit, plays an essential role in the biogenesis of the K88 fimbriae. required at some step in the initiation and/or elongation of the K88 fimbriae. The protein is K88 minor fimbrial subunit FaeF (faeF) of Escherichia coli.